Here is a 613-residue protein sequence, read N- to C-terminus: Dihydroxy-acid dehydratase (613 aa).

D81 serves as a coordination point for Mg(2+). C122 contacts [2Fe-2S] cluster. Positions 123 and 124 each coordinate Mg(2+). K124 carries the N6-carboxylysine modification. C195 provides a ligand contact to [2Fe-2S] cluster. E491 lines the Mg(2+) pocket. S517 functions as the Proton acceptor in the catalytic mechanism.

It belongs to the IlvD/Edd family. Homodimer. Requires [2Fe-2S] cluster as cofactor. Mg(2+) is required as a cofactor.

The enzyme catalyses (2R)-2,3-dihydroxy-3-methylbutanoate = 3-methyl-2-oxobutanoate + H2O. It catalyses the reaction (2R,3R)-2,3-dihydroxy-3-methylpentanoate = (S)-3-methyl-2-oxopentanoate + H2O. It participates in amino-acid biosynthesis; L-isoleucine biosynthesis; L-isoleucine from 2-oxobutanoate: step 3/4. It functions in the pathway amino-acid biosynthesis; L-valine biosynthesis; L-valine from pyruvate: step 3/4. Functions in the biosynthesis of branched-chain amino acids. Catalyzes the dehydration of (2R,3R)-2,3-dihydroxy-3-methylpentanoate (2,3-dihydroxy-3-methylvalerate) into 2-oxo-3-methylpentanoate (2-oxo-3-methylvalerate) and of (2R)-2,3-dihydroxy-3-methylbutanoate (2,3-dihydroxyisovalerate) into 2-oxo-3-methylbutanoate (2-oxoisovalerate), the penultimate precursor to L-isoleucine and L-valine, respectively. The protein is Dihydroxy-acid dehydratase of Aeromonas hydrophila subsp. hydrophila (strain ATCC 7966 / DSM 30187 / BCRC 13018 / CCUG 14551 / JCM 1027 / KCTC 2358 / NCIMB 9240 / NCTC 8049).